Here is a 298-residue protein sequence, read N- to C-terminus: GTPase Era (298 aa).

One can recognise an Era-type G domain in the interval 8–176 (HCGSVAVIGR…VRDVLKLLPE (169 aa)). A G1 region spans residues 16 to 23 (GRPNVGKS). Position 16–23 (16–23 (GRPNVGKS)) interacts with GTP. The G2 stretch occupies residues 42 to 46 (QTTRH). A G3 region spans residues 63–66 (DTPG). GTP contacts are provided by residues 63–67 (DTPGL) and 125–128 (NKID). Residues 125–128 (NKID) form a G4 region. The segment at 155–157 (ISA) is G5. The region spanning 199–283 (VREQLMRQLG…FLETWVRVRE (85 aa)) is the KH type-2 domain.

This sequence belongs to the TRAFAC class TrmE-Era-EngA-EngB-Septin-like GTPase superfamily. Era GTPase family. In terms of assembly, monomer.

The protein localises to the cytoplasm. The protein resides in the cell inner membrane. In terms of biological role, an essential GTPase that binds both GDP and GTP, with rapid nucleotide exchange. Plays a role in 16S rRNA processing and 30S ribosomal subunit biogenesis and possibly also in cell cycle regulation and energy metabolism. This chain is GTPase Era, found in Stenotrophomonas maltophilia (strain K279a).